We begin with the raw amino-acid sequence, 295 residues long: Virginiamycin B lyase (295 aa).

A substrate-binding site is contributed by histidine 228. Glutamate 268 contributes to the Mg(2+) binding site. Histidine 270 functions as the Proton acceptor in the catalytic mechanism. A Mg(2+)-binding site is contributed by glutamate 285.

The protein belongs to the Vgb family. In terms of assembly, monomer. The cofactor is Mg(2+).

Functionally, inactivates the type B streptogramin antibiotics by linearizing the lactone ring at the ester linkage, generating a free phenylglycine carboxylate and converting the threonyl moiety into 2-amino-butenoic acid. The sequence is that of Virginiamycin B lyase from Clostridium beijerinckii (strain ATCC 51743 / NCIMB 8052) (Clostridium acetobutylicum).